We begin with the raw amino-acid sequence, 124 residues long: Small ribosomal subunit protein uS12 (124 aa).

The segment at 1-22 (MATINQLVRKPRKRKVAKSDVP) is disordered. Residue Asp89 is modified to 3-methylthioaspartic acid. Residues 101–124 (TLDTQGVQNRKQGRSKYGAKRPKS) form a disordered region. A compositionally biased stretch (basic residues) spans 111-124 (KQGRSKYGAKRPKS).

Belongs to the universal ribosomal protein uS12 family. Part of the 30S ribosomal subunit. Contacts proteins S8 and S17. May interact with IF1 in the 30S initiation complex.

In terms of biological role, with S4 and S5 plays an important role in translational accuracy. Functionally, interacts with and stabilizes bases of the 16S rRNA that are involved in tRNA selection in the A site and with the mRNA backbone. Located at the interface of the 30S and 50S subunits, it traverses the body of the 30S subunit contacting proteins on the other side and probably holding the rRNA structure together. The combined cluster of proteins S8, S12 and S17 appears to hold together the shoulder and platform of the 30S subunit. This chain is Small ribosomal subunit protein uS12, found in Marinobacter nauticus (strain ATCC 700491 / DSM 11845 / VT8) (Marinobacter aquaeolei).